Consider the following 279-residue polypeptide: Thymidylate synthase (279 aa).

Position 21 (Arg-21) interacts with dUMP. (6R)-5,10-methylene-5,6,7,8-tetrahydrofolate is bound at residue His-51. 126-127 (RR) is a binding site for dUMP. Residue Cys-159 is the Nucleophile of the active site. Residues 179-182 (RSAD), Asn-190, and 220-222 (HLY) contribute to the dUMP site. Asp-182 lines the (6R)-5,10-methylene-5,6,7,8-tetrahydrofolate pocket. Ala-278 contacts (6R)-5,10-methylene-5,6,7,8-tetrahydrofolate.

It belongs to the thymidylate synthase family. Bacterial-type ThyA subfamily. As to quaternary structure, homodimer.

The protein localises to the cytoplasm. It catalyses the reaction dUMP + (6R)-5,10-methylene-5,6,7,8-tetrahydrofolate = 7,8-dihydrofolate + dTMP. The protein operates within pyrimidine metabolism; dTTP biosynthesis. Catalyzes the reductive methylation of 2'-deoxyuridine-5'-monophosphate (dUMP) to 2'-deoxythymidine-5'-monophosphate (dTMP) while utilizing 5,10-methylenetetrahydrofolate (mTHF) as the methyl donor and reductant in the reaction, yielding dihydrofolate (DHF) as a by-product. This enzymatic reaction provides an intracellular de novo source of dTMP, an essential precursor for DNA biosynthesis. The protein is Thymidylate synthase of Marinobacter nauticus (strain ATCC 700491 / DSM 11845 / VT8) (Marinobacter aquaeolei).